The chain runs to 180 residues: ATP synthase subunit b, chloroplastic (180 aa).

The chain crosses the membrane as a helical span at residues 28-48 (VTTLINIGVVLCLLIIFGKGF).

The protein belongs to the ATPase B chain family. In terms of assembly, F-type ATPases have 2 components, F(1) - the catalytic core - and F(0) - the membrane proton channel. F(1) has five subunits: alpha(3), beta(3), gamma(1), delta(1), epsilon(1). F(0) has four main subunits: a(1), b(1), b'(1) and c(10-14). The alpha and beta chains form an alternating ring which encloses part of the gamma chain. F(1) is attached to F(0) by a central stalk formed by the gamma and epsilon chains, while a peripheral stalk is formed by the delta, b and b' chains.

The protein localises to the plastid. It localises to the chloroplast thylakoid membrane. Its function is as follows. F(1)F(0) ATP synthase produces ATP from ADP in the presence of a proton or sodium gradient. F-type ATPases consist of two structural domains, F(1) containing the extramembraneous catalytic core and F(0) containing the membrane proton channel, linked together by a central stalk and a peripheral stalk. During catalysis, ATP synthesis in the catalytic domain of F(1) is coupled via a rotary mechanism of the central stalk subunits to proton translocation. Component of the F(0) channel, it forms part of the peripheral stalk, linking F(1) to F(0). The sequence is that of ATP synthase subunit b, chloroplastic from Cuscuta obtusiflora (Peruvian dodder).